A 271-amino-acid polypeptide reads, in one-letter code: MKNNYTSLKSPLDEEDELKTDHEIDLEKGLLPEYNSEEEGALPPYSDISKLAKTVPEDSSTGPTETANPNVERRQGFKDSHPNIYSLLRLLISVLAVSVVFFTAWVCVNPLEKSIFGKVAFSVTIGITCPILFIAIFCFFETWTQAVAQCIKVTAIFLAQCVKACGKGIKHFLKKWENMPMAFSEVFLFNILVGSPRMNLRYIFGDRWGLKCSLAEHITFVVLSILVFIAETVKPGSIRVNLIRKMGYEAKQQVNEYTAVPLREMNPESEA.

Disordered stretches follow at residues 1 to 24 (MKNNYTSLKSPLDEEDELKTDHEI) and 54 to 75 (TVPEDSSTGPTETANPNVERRQ). Positions 57–69 (EDSSTGPTETANP) are enriched in polar residues. A run of 4 helical transmembrane segments spans residues 90 to 110 (LLISVLAVSVVFFTAWVCVNP), 120 to 140 (AFSVTIGITCPILFIAIFCFF), 176 to 196 (WENMPMAFSEVFLFNILVGSP), and 213 to 233 (SLAEHITFVVLSILVFIAETV).

This sequence belongs to the WTF family. In terms of assembly, homomer. Interacts with other proteins that exhibit high sequence similarity.

It localises to the spore membrane. The protein localises to the vacuole membrane. In terms of biological role, acts as a suppressor component of the dual wtf meiotic drive system, and can suppress but not confer meiotic drive by compatible poisons. Wtf meiotic drive systems promote unequal transmission of alleles from the parental zygote to progeny spores by encoding a poison and an antidote from the same locus; the poison is trans-acting and forms toxic aggregates in all spores within an ascus, wherease the antidote is spore-specific and targets aggregates for degradation by the vacuole. Meiotic drive by wtf systems therefore lead to poisoning of all progeny that do not inherit the dual poison/antidote allele, or express a compatible antidote. This Schizosaccharomyces kambucha (Fission yeast) protein is Meiotic drive suppressor wtf35.